Consider the following 809-residue polypeptide: Transitional endoplasmic reticulum ATPase homolog 1 (809 aa).

The tract at residues 1–21 (MASVPTHQSEKEKKNDELSTA) is disordered. Residues 8–21 (QSEKEKKNDELSTA) show a composition bias toward basic and acidic residues. ATP contacts are provided by residues 253–259 (PGTGKTL), Asn354, His390, and 527–532 (GCGKTL). The interval 779 to 809 (FGNNFKFPGEQRGSDAPSAPVPAQDDDDLYN) is disordered. Positions 803–809 (DDDDLYN) are interaction with ufd-2.

Belongs to the AAA ATPase family. CDC48 subfamily. Homohexamer; oligomerization is ATP-independent. Forms a ring-shaped particle of 18.3 nm diameter, that displays 6-fold radial symmetry. Interacts with cdc-48.2 and thus may form heterohexamers. Forms a complex composed of cdc-48.1, him-6 and crp-1; within the complex, interacts with helicase him-6 and GTPase crp-1. Forms a complex composed of deubiquitinating enzyme atx-3, adapter ubxn-5 and cdc-48.1; within the complex, interacts (via N-terminus) with ubxn-5 and with atx-3. Forms a complex composed of deubiquitinating enzyme atx-3, E4 ubiquitin-protein ligase ufd-2 and cdc-48.1; within the complex, interacts with atx-3 and (via DDDLYN motif) with ufd-2. Interacts (via N-terminus) with atx-3 (via RRDR motif); the interaction is not required for atx-3 enzymatic activity. Forms a complex composed of cdc-48.1, myosin chaperone unc-45, ubiquitin-protein ligases ufd-2 and chn-1; within the complex, interacts (via DDDLYN motif) with ufd-2 and targets myosin chaperone unc-45 for proteasomal degradation. Forms a complex composed of ubxn-3, ufd-1, npl-4.1 and cdc-48.1; within the complex, interacts (via N-terminus) with ubxn-3 (via FPK motif) and with ufd-1. Forms a complex composed of ubxn-3, cdc-48.1 and/or cdc-48.2 and substrate cdt-1. Interacts (via N-terminus) with ubxn-1. Interacts (via N-terminus) with ubxn-2. Interacts (via N-terminus) with ubxn-4. Interacts with ubxn-6. Interacts with ufd-3. Does not interact with air-2. In terms of tissue distribution, expressed in germ cells and spermatheca. Expressed in body wall muscles.

The protein resides in the cytoplasm. It is found in the perinuclear region. The enzyme catalyses ATP + H2O = ADP + phosphate + H(+). With respect to regulation, the first ATP-binding region has low ATPase activity. The second ATP-binding region is responsible for ATPase activity. ATP binding to the first ATP-binding region induces intrinsic activity of the second ATP-binding region. While ATP binding to the first ATP-binding region appears to prevent ATP hydrolysis by the second ATP-binding region, ADP-binding to first region promotes the coordinate and cooperative ATPase cycle of the second ATP-binding region. ATP binding to the first ATP-binding region induces a conformational change, promoting the rotation of the first ATP-binding region relative to the second ATP-binding region in the hexamer. Inhibited by N-ethylmaleimide (NEM). In terms of biological role, ATP-dependent chaperone which probably uses the energy provided by ATP hydrolysis to generate mechanical force to unfold substrate proteins, disassemble protein complexes, and disaggregate protein aggregates. Can also prevent aggregation of unfolded proteins also in an ATP-independent manner. Targets polyubiquitinated proteins for proteasomal degradation by binding to 'Lys-48'-linked polyubiquitin chains. Involved in the cytoplasmic elimination of misfolded proteins exported from the ER. This pathway, known as ERAD, prevents the activation of the unfolded protein response (UPR) caused by the accumulation of misfolded proteins in the ER. In association with helicase him-6 and GTPase crp-1, regulates the unfolded protein response (UPR) following ER stress, probably independently of the ERAD pathway. Together with udf-2 and chn-1, regulates myosin assembly in body wall muscles by targeting myosin chaperone unc-45 for proteasomal degradation. Together with the ufd-1-npl-4 complex, controls the switch from spermatogenesis to oogenesis by regulating E3 ligase cul-2 complex-mediated tra-1 proteasomal degradation. During oocyte meiosis and together with cdc-48.2, required for chromosome condensation at the diakinesis phase in prophase I and for progression of metaphase I. During the first embryonic cell division, regulates DNA replication and thus chromosome segregation and decondensation, and nuclear envelope re-assembly. In S phase and in association with ufd-1, npl-4.1 and/or npl-4.2 and ubxn-3, ensures the degradation of DNA licensing factor cdt-1 after the initiation of DNA replication and thus the disassembly of the DNA replication CMG helicase complex by promoting the dissociation from chromatin of several of its components including cdc-45 and sld-5. Regulates ubxn-3 nuclear localization during S phase. During the first embryonic cell divisions and together with cdc-48.2, regulates the re-assembly of the nuclear envelope after mitosis possibly by inactivating kinase air-2, a component of the chromosomal passenger complex (CPC). However, in another study, cdc-48.1 does not appear to be implicated in the regulation of air-2. This Caenorhabditis elegans protein is Transitional endoplasmic reticulum ATPase homolog 1.